Reading from the N-terminus, the 442-residue chain is DMATS-type prenyltransferase mfmD (442 aa).

Belongs to the tryptophan dimethylallyltransferase family.

The protein operates within secondary metabolite biosynthesis; terpenoid biosynthesis. Functionally, prenyltransferase; part of the gene cluster that mediates the biosynthesis of the phthalide-terpenoid hybrid 11'-O-desmethylfendlerol. Within the pathway, mfmD is responsible for farnesylation of the cyclopolic acid intermediate via an O-prenylation reaction. The biosynthesis of 11'-O-desmethylfendlerol begins with the NR-PKS mfmB that forms 3,5-dimethylorsellinic acid (DMOA), which is then transformed into the phthalide 5,7-dihydroxy-4-(hydroxymethyl)-6-methylphthalide by the cytochrome P450 monooxygenase mfmA and the hydrolase mfmC. Subsequently, the methyltransferase mfmE catalyzes 7-O-methylation to yield 5-hydroxy-4-(hydroxymethyl)-7-methoxy-6-methylphthalide, which undergoes C-3 hydroxylation by the cytochrome P450 monooxygenase mfmF. The resultant cyclopolic acid (2,5-dihydroxy-4-(hydroxymethyl)-7-methoxy-6-methylphthalide) is then farnesylated by the DMATS-type prenyltransferase mfmD to afford 5-O-farnesylcyclopolic acid. Finally, the Pyr4-family terpene cyclase mfmH cyclizes the farnesyl moiety of 5-O-farnesylcyclopolic acid into a drimane-like structure, thus completing the biosynthesis of 11'-O-desmethylfendlerol. The sequence is that of DMATS-type prenyltransferase mfmD from Annulohypoxylon moriforme (Filamentous fungus).